Here is a 158-residue protein sequence, read N- to C-terminus: ATP synthase subunit beta, mitochondrial (158 aa).

This sequence belongs to the ATPase alpha/beta chains family. As to quaternary structure, F-type ATPases have 2 components, CF(1) - the catalytic core - and CF(0) - the membrane proton channel. CF(1) has five subunits: alpha(3), beta(3), gamma(1), delta(1), epsilon(1). CF(0) has three main subunits: a, b and c.

The protein localises to the mitochondrion. The protein resides in the mitochondrion inner membrane. It catalyses the reaction ATP + H2O + 4 H(+)(in) = ADP + phosphate + 5 H(+)(out). Its function is as follows. Mitochondrial membrane ATP synthase (F(1)F(0) ATP synthase or Complex V) produces ATP from ADP in the presence of a proton gradient across the membrane which is generated by electron transport complexes of the respiratory chain. F-type ATPases consist of two structural domains, F(1) - containing the extramembraneous catalytic core, and F(0) - containing the membrane proton channel, linked together by a central stalk and a peripheral stalk. During catalysis, ATP synthesis in the catalytic domain of F(1) is coupled via a rotary mechanism of the central stalk subunits to proton translocation. Subunits alpha and beta form the catalytic core in F(1). Rotation of the central stalk against the surrounding alpha(3)beta(3) subunits leads to hydrolysis of ATP in three separate catalytic sites on the beta subunits. The chain is ATP synthase subunit beta, mitochondrial from Schizaphis graminum (Green bug aphid).